A 715-amino-acid polypeptide reads, in one-letter code: MFNHHKVEIEWGGRPLILETGKIARQADGAVLATYGETVVLATVVSAKEPKPGIDFFPLTVNYQEKTFAAGKIPGGYFKREGRPSEKETLVSRLIDRPIRPLFVEGYKNDTQVIITVLQHDLENDPDILSMVAASAALTLSGVPFMGPVGAARVGYVGGEYILNPHLDEMAETKLDLVVAGTSDAVLMVESEAHELPEDVMLGAVMFGHRNFQPVIDAIIKLAEVAAKEPREFLPEDLSALEAEMLKVVEADLRDAYKITNKQARYDAVNAAKAKVKEAFLPEGAEAYKWTPEQVATVFKALQAKIVRWNILDTGSRIDGRDLRSVRPIVAEVGVLPRTHGSAVFTRGETQALVVATLGTGEDEQYVDSLTGTVKETFMLHYNFPPYSVGETGRMGSPGRREIGHGKLAWRAVHPLLPAPEQFPYTIRVVSEITESNGSSSMATVCGTSLALMDAGVPLAKPVAGIAMGLIKEDDRFAVLSDILGDEDHLGDMDFKVAGTAEGVTSLQMDIKITGITEEIMKVALEQAKDGRLHILGEMANALSESRGELGEFAPRIEVMHIPTDKIRDVIGTGGKVIREIVEKTGAKINIEDDGTVKIASSNGKEIEAARKWIHSIVAEPEVGEIYEGTVVKTADFGAFVNFFGPRDGLVHISQLAPERVQKTTDVVKEGDKVFVKLMGFDERGKVRLSMKVVDQETGKEIVQEKKEEKQEAEG.

Residues Asp-488 and Asp-494 each coordinate Mg(2+). The KH domain occupies 555–614 (PRIEVMHIPTDKIRDVIGTGGKVIREIVEKTGAKINIEDDGTVKIASSNGKEIEAARKWI). Residues 624 to 692 (GEIYEGTVVK…ERGKVRLSMK (69 aa)) enclose the S1 motif domain.

The protein belongs to the polyribonucleotide nucleotidyltransferase family. The cofactor is Mg(2+).

The protein resides in the cytoplasm. It carries out the reaction RNA(n+1) + phosphate = RNA(n) + a ribonucleoside 5'-diphosphate. Functionally, involved in mRNA degradation. Catalyzes the phosphorolysis of single-stranded polyribonucleotides processively in the 3'- to 5'-direction. The sequence is that of Polyribonucleotide nucleotidyltransferase from Chelativorans sp. (strain BNC1).